The sequence spans 412 residues: N-carbamoyl-L-amino-acid amidohydrolase (412 aa).

The a divalent metal cation site is built by His82, Asp93, Glu128, and His193. Residues Gln196, His229, Asn278, Arg291, and Gly360 each coordinate an N-carbamoyl-L-alpha-amino acid. An involved in dimerization region spans residues 212–330 (SIVGVRALRV…DVDEFFNLSP (119 aa)). His385 is an a divalent metal cation binding site.

Belongs to the peptidase M20 family. Homodimer. Mn(2+) is required as a cofactor. Ni(2+) serves as cofactor. The cofactor is Co(2+). Requires Fe(2+) as cofactor.

The enzyme catalyses an N-carbamoyl-L-alpha-amino acid + H2O + 2 H(+) = an L-alpha-amino acid + NH4(+) + CO2. The catalysed reaction is N-carbamoyl-L-tryptophan + H2O + 2 H(+) = L-tryptophan + NH4(+) + CO2. It carries out the reaction N-carbamoyl-L-tyrosine + H2O + 2 H(+) = L-tyrosine + NH4(+) + CO2. It catalyses the reaction N-carbamoyl-L-phenylalanine + H2O + 2 H(+) = L-phenylalanine + NH4(+) + CO2. Functionally, catalyzes the hydrolysis of aliphatic N-carbamoyl-L-alpha-amino acids to free L-alpha-amino acids. Is strictly L-specific since it is inactive toward N-carbamoyl-D-alpha-amino acids. Shows a preference for aromatic N-carbamoyl-L-alpha-amino acids, such as N-carbamoyl-L-tryptophan and N-carbamoyl-L-tyrosine and, to a lesser extent, N-carbamoyl-L-phenylalanine and the non-natural amino acid N-carbamoyl-L-thienylalanine. Carbamoyl derivatives of beta-alanine and charged aliphatic amino acids are not accepted as substrates. The chain is N-carbamoyl-L-amino-acid amidohydrolase from Paenarthrobacter aurescens (Arthrobacter aurescens).